The sequence spans 313 residues: Ribosomal RNA small subunit methyltransferase H (313 aa).

S-adenosyl-L-methionine contacts are provided by residues 35-37 (GGH), aspartate 55, phenylalanine 81, aspartate 103, and glutamine 110.

Belongs to the methyltransferase superfamily. RsmH family.

Its subcellular location is the cytoplasm. The enzyme catalyses cytidine(1402) in 16S rRNA + S-adenosyl-L-methionine = N(4)-methylcytidine(1402) in 16S rRNA + S-adenosyl-L-homocysteine + H(+). In terms of biological role, specifically methylates the N4 position of cytidine in position 1402 (C1402) of 16S rRNA. This Pseudomonas aeruginosa (strain LESB58) protein is Ribosomal RNA small subunit methyltransferase H.